A 396-amino-acid polypeptide reads, in one-letter code: MSHPPTILRKTHPLLSLGNSMLVDLPSPANISAWWNFGSLLSLCLILQIITGLILAMHYTANTELAFSSVMHICRDVNNGWLMRNLHANGASMFFICIYAHIGRGIYYGSYLYKETWNVGVILFALTAATAFVGYVLPWGQMSFWGATVITNLISAVPYVGDDIVMWLWGGFSVSNATLTRFFTFHFILPFILAAMTMIHIMFLHQTGSSNPLGINSNLDKIQFHPYFSFKDIFGFVILLGVLFMISLLPPNALCEPDNFIYANPLSTPPHIKPEWYFLFAYAILRSIPNKLGGVMALAAAIMILLVIPFTHTSKQRGIQFRPLAQVTFWILIADLALLTWLGGEPAEHPFILMTQIASTVYFMIFILIFPILGRLENKLILLSKNTGKFNWNLTY.

Transmembrane regions (helical) follow at residues 37–57, 81–102, 117–137, and 182–202; these read FGSLLSLCLILQIITGLILAM, WLMRNLHANGASMFFICIYAHI, WNVGVILFALTAATAFVGYVL, and FFTFHFILPFILAAMTMIHIM. 2 residues coordinate heme b: His87 and His101. The heme b site is built by His186 and His200. His205 provides a ligand contact to a ubiquinone. The next 4 helical transmembrane spans lie at 230 to 250, 292 to 312, 324 to 344, and 351 to 371; these read FKDIFGFVILLGVLFMISLLP, LGGVMALAAAIMILLVIPFTH, LAQVTFWILIADLALLTWLGG, and FILMTQIASTVYFMIFILIFP.

The protein belongs to the cytochrome b family. The cytochrome bc1 complex contains 3 respiratory subunits (MT-CYB, CYC1 and UQCRFS1), 2 core proteins (UQCRC1 and UQCRC2) and probably 6 low-molecular weight proteins. Requires heme b as cofactor.

The protein resides in the mitochondrion inner membrane. In terms of biological role, component of the ubiquinol-cytochrome c reductase complex (complex III or cytochrome b-c1 complex) that is part of the mitochondrial respiratory chain. The b-c1 complex mediates electron transfer from ubiquinol to cytochrome c. Contributes to the generation of a proton gradient across the mitochondrial membrane that is then used for ATP synthesis. The sequence is that of Cytochrome b (mt-cyb) from Lampetra fluviatilis (European river lamprey).